Consider the following 182-residue polypeptide: tRNA-splicing endonuclease (182 aa).

Active-site residues include Y119, H127, and K158.

This sequence belongs to the tRNA-intron endonuclease family. Archaeal short subfamily. As to quaternary structure, homotetramer; although the tetramer contains four active sites, only two participate in the cleavage. Therefore, it should be considered as a dimer of dimers.

It carries out the reaction pretRNA = a 3'-half-tRNA molecule with a 5'-OH end + a 5'-half-tRNA molecule with a 2',3'-cyclic phosphate end + an intron with a 2',3'-cyclic phosphate and a 5'-hydroxyl terminus.. In terms of biological role, endonuclease that removes tRNA introns. Cleaves pre-tRNA at the 5'- and 3'-splice sites to release the intron. The products are an intron and two tRNA half-molecules bearing 2',3' cyclic phosphate and 5'-OH termini. Recognizes a pseudosymmetric substrate in which 2 bulged loops of 3 bases are separated by a stem of 4 bp. The protein is tRNA-splicing endonuclease of Saccharolobus islandicus (strain Y.N.15.51 / Yellowstone #2) (Sulfolobus islandicus).